The chain runs to 372 residues: Chorismate synthase (372 aa).

Residues R48 and R54 each coordinate NADP(+). Residues 125–127 (RSS), 238–239 (NA), G278, 293–297 (KPTSS), and R319 contribute to the FMN site.

It belongs to the chorismate synthase family. Homotetramer. It depends on FMNH2 as a cofactor.

It carries out the reaction 5-O-(1-carboxyvinyl)-3-phosphoshikimate = chorismate + phosphate. The protein operates within metabolic intermediate biosynthesis; chorismate biosynthesis; chorismate from D-erythrose 4-phosphate and phosphoenolpyruvate: step 7/7. In terms of biological role, catalyzes the anti-1,4-elimination of the C-3 phosphate and the C-6 proR hydrogen from 5-enolpyruvylshikimate-3-phosphate (EPSP) to yield chorismate, which is the branch point compound that serves as the starting substrate for the three terminal pathways of aromatic amino acid biosynthesis. This reaction introduces a second double bond into the aromatic ring system. The sequence is that of Chorismate synthase from Xylella fastidiosa (strain 9a5c).